The following is a 1377-amino-acid chain: DNA-directed RNA polymerase subunit beta (1377 aa).

This sequence belongs to the RNA polymerase beta chain family. As to quaternary structure, the RNAP catalytic core consists of 2 alpha, 1 beta, 1 beta' and 1 omega subunit. When a sigma factor is associated with the core the holoenzyme is formed, which can initiate transcription.

The catalysed reaction is RNA(n) + a ribonucleoside 5'-triphosphate = RNA(n+1) + diphosphate. Functionally, DNA-dependent RNA polymerase catalyzes the transcription of DNA into RNA using the four ribonucleoside triphosphates as substrates. This Brucella suis biovar 1 (strain 1330) protein is DNA-directed RNA polymerase subunit beta.